A 142-amino-acid polypeptide reads, in one-letter code: Large ribosomal subunit protein uL11 (142 aa).

It belongs to the universal ribosomal protein uL11 family. In terms of assembly, part of the ribosomal stalk of the 50S ribosomal subunit. Interacts with L10 and the large rRNA to form the base of the stalk. L10 forms an elongated spine to which L12 dimers bind in a sequential fashion forming a multimeric L10(L12)X complex. In terms of processing, one or more lysine residues are methylated.

Forms part of the ribosomal stalk which helps the ribosome interact with GTP-bound translation factors. This Buchnera aphidicola subsp. Schizaphis graminum (strain Sg) protein is Large ribosomal subunit protein uL11.